Here is a 180-residue protein sequence, read N- to C-terminus: NAD(P)H-quinone oxidoreductase subunit I, chloroplastic (180 aa).

2 4Fe-4S ferredoxin-type domains span residues 55–84 (GRIH…VDWK) and 95–124 (LNYS…MTEE). [4Fe-4S] cluster is bound by residues C64, C67, C70, C74, C104, C107, C110, and C114.

It belongs to the complex I 23 kDa subunit family. In terms of assembly, NDH is composed of at least 16 different subunits, 5 of which are encoded in the nucleus. [4Fe-4S] cluster serves as cofactor.

It localises to the plastid. It is found in the chloroplast thylakoid membrane. It carries out the reaction a plastoquinone + NADH + (n+1) H(+)(in) = a plastoquinol + NAD(+) + n H(+)(out). The catalysed reaction is a plastoquinone + NADPH + (n+1) H(+)(in) = a plastoquinol + NADP(+) + n H(+)(out). Functionally, NDH shuttles electrons from NAD(P)H:plastoquinone, via FMN and iron-sulfur (Fe-S) centers, to quinones in the photosynthetic chain and possibly in a chloroplast respiratory chain. The immediate electron acceptor for the enzyme in this species is believed to be plastoquinone. Couples the redox reaction to proton translocation, and thus conserves the redox energy in a proton gradient. The sequence is that of NAD(P)H-quinone oxidoreductase subunit I, chloroplastic from Nandina domestica (Heavenly bamboo).